Consider the following 473-residue polypeptide: MTKNIGKITQIISAVVDVKFTNNSKLPAILNALECYSDNQRIVLEVVQHIGDDTVRCIAMDSTEGLVRGLEVVDTGSPICIPVGTATLGRIMNVVGESIDGKGEIKSSNVSSIYKPAPSFTNQSSERTILVTGIKVVDLLAPYTKGGKIGLFGGAGVGKTVLIMELINNVAKAHGGYTVFAGVGERTREGNDLYHEMIDSGVINLEEPEKSKVALVYGQMDEPPGARARVALSGLTIAESFRDMNEGQDVLFFVDNIFRFTQAGSEVSALLGRVPSAVGYQPTLATDMGALQERITSTKHGSITSVQAIYVPADDLTDPAPATSFAHLDATTVLSRQIAELGIYPAVDPLDSNSQVLDPMIVGEEHYSVARQVQQVLQTYKSLQDIIAILGMDELSEEDKLTVSRARKIQRFLSQPFHVAEVFTGVEGKFVDLADTIEGFKGLVEGQYDGLPEAAFYMVGTIDEAIEKARTLK.

Position 153-160 (153-160 (GGAGVGKT)) interacts with ATP.

The protein belongs to the ATPase alpha/beta chains family. F-type ATPases have 2 components, CF(1) - the catalytic core - and CF(0) - the membrane proton channel. CF(1) has five subunits: alpha(3), beta(3), gamma(1), delta(1), epsilon(1). CF(0) has three main subunits: a(1), b(2) and c(9-12). The alpha and beta chains form an alternating ring which encloses part of the gamma chain. CF(1) is attached to CF(0) by a central stalk formed by the gamma and epsilon chains, while a peripheral stalk is formed by the delta and b chains.

The protein resides in the cell inner membrane. It carries out the reaction ATP + H2O + 4 H(+)(in) = ADP + phosphate + 5 H(+)(out). Produces ATP from ADP in the presence of a proton gradient across the membrane. The catalytic sites are hosted primarily by the beta subunits. The chain is ATP synthase subunit beta from Rickettsia canadensis (strain McKiel).